The following is a 610-amino-acid chain: Phragmoplastin DRP1A (610 aa).

Methionine 1 is modified (N-acetylmethionine). The region spanning tryptophan 31–proline 300 is the Dynamin-type G domain. The segment at glycine 41 to serine 48 is G1 motif. Serine 44 to serine 49 contacts GTP. The interval valine 67–arginine 69 is G2 motif. Residues aspartate 142 to glycine 145 are G3 motif. Residues threonine 211–aspartate 214 form a G4 motif region. Residues lysine 212 to aspartate 217 and asparagine 242 to glutamine 245 contribute to the GTP site. Residues valine 241–serine 244 form a G5 motif region. Positions leucine 518–lysine 610 constitute a GED domain.

This sequence belongs to the TRAFAC class dynamin-like GTPase superfamily. Dynamin/Fzo/YdjA family. As to quaternary structure, forms homodimer and may homooligomerize and heterooligomerize to form the phragmoplastin complex. Interacts with AGD3/VAN3. May interact with CALS1. Binds to AHK2. Binds to SH3P2. Forms a complex made of SH3P2 and DRP1A and triggers its accumulation at the cell plate. Interacts with DRP2B at the plasma membrane and in forming clathrin-coated vesicles (CCV). Binds to PHIP1. Ubiquitous. Expressed in leaves (at protein level).

Its subcellular location is the cytoplasm. It localises to the cytoskeleton. It is found in the phragmoplast. The protein localises to the cell cortex. The protein resides in the cytoplasmic vesicle. Its subcellular location is the clathrin-coated vesicle. It localises to the cell membrane. The catalysed reaction is GTP + H2O = GDP + phosphate + H(+). Functionally, microtubule-associated force-producing protein that is targeted to at the leading edges of the forming cell plate during cytokinesis. Also plays a major role in plasma membrane maintenance and cell wall integrity with implications in vesicular trafficking, polar cell expansion, vascular formation, and other aspects of plant growth and development, including stigmatic papillae expansion. Collaboratively with DRP2B, participates in clathrin-coated vesicle formation during endocytosis. Necessary for BOR1 polar localization in low-boron (B) conditions as well as for BOR1 endocytosis and subsequent degradation under high-concentration of boron. Has a GTPase activity. Required for the sterols-dependent dynamic high lipid order observed at the cell plate of dividing cells. Together with SH3P2, converts the fused vesicles to tubular structures at the cell plate and phragmoplasts during cytokinesis. With DRP2B and PIP5K3, required for the precise coordination of polar ARAC3/ROP6 and ARAC4/ROP2 placement and subsequent root hair positioning during planar polarity formation in root hair-forming cells, probably by mediating the correct basal-to-planar polarity switching of D6PK into the polar, lipid-enriched domain. Involved in endocytosis required for cellulose deposition during cell wall formation and elongation. Interacts with plasma membrane-mimetic liposomes and induces their clustering. This Arabidopsis thaliana (Mouse-ear cress) protein is Phragmoplastin DRP1A.